The chain runs to 998 residues: Protein Smaug (998 aa).

Over residues M1 to T37 the composition is skewed to polar residues. Disordered stretches follow at residues M1 to S45, T50 to P69, and L329 to S370. Low complexity predominate over residues L329–S338. Phosphoserine is present on residues S564 and S575. Residues E583 to M763 are interaction with cup. The SAM domain maps to G600 to K654. Disordered stretches follow at residues H773–M892 and N943–K977. Composition is skewed to polar residues over residues K801–L822 and H854–P864. S971 is subject to Phosphoserine.

The protein belongs to the SMAUG family. In terms of assembly, interacts with oskar (osk). Binds to the 3'-UTR of nos. Interacts with cup, which in turn recruits eIF4-E, leading to an indirect interaction between smg and eIF4-E that prevents mRNA translation.

It localises to the cytoplasm. In terms of biological role, translation regulator that binds to the 3'-UTR of specific mRNAs such as nanos (nos) and prevent their translation. Prevents translation of unlocalized nos in the bulk cytoplasm via the recruitment of cup. The protein is Protein Smaug of Drosophila sechellia (Fruit fly).